The chain runs to 477 residues: Aspartyl/glutamyl-tRNA(Asn/Gln) amidotransferase subunit B (477 aa).

It belongs to the GatB/GatE family. GatB subfamily. In terms of assembly, heterotrimer of A, B and C subunits.

The catalysed reaction is L-glutamyl-tRNA(Gln) + L-glutamine + ATP + H2O = L-glutaminyl-tRNA(Gln) + L-glutamate + ADP + phosphate + H(+). The enzyme catalyses L-aspartyl-tRNA(Asn) + L-glutamine + ATP + H2O = L-asparaginyl-tRNA(Asn) + L-glutamate + ADP + phosphate + 2 H(+). Allows the formation of correctly charged Asn-tRNA(Asn) or Gln-tRNA(Gln) through the transamidation of misacylated Asp-tRNA(Asn) or Glu-tRNA(Gln) in organisms which lack either or both of asparaginyl-tRNA or glutaminyl-tRNA synthetases. The reaction takes place in the presence of glutamine and ATP through an activated phospho-Asp-tRNA(Asn) or phospho-Glu-tRNA(Gln). The chain is Aspartyl/glutamyl-tRNA(Asn/Gln) amidotransferase subunit B from Coxiella burnetii (strain CbuG_Q212) (Coxiella burnetii (strain Q212)).